Reading from the N-terminus, the 449-residue chain is Chromosomal replication initiator protein DnaA (449 aa).

Residues 1–69 are domain I, interacts with DnaA modulators; the sequence is MEKVWLEAQS…VEAISSLTSV (69 aa). Residues 69–112 are domain II; that stretch reads VKYQIEFKITEKIPLESKPVDNFTPVIKDNEPSKETNKNIDITA. Positions 113–329 are domain III, AAA+ region; it reads NLNPKYTFDS…GMLIRLGAYA (217 aa). ATP-binding residues include G157, G159, K160, and T161. The interval 330–449 is domain IV, binds dsDNA; sequence SLTGSEITLN…VENLKKELIT (120 aa).

Belongs to the DnaA family. In terms of assembly, oligomerizes as a right-handed, spiral filament on DNA at oriC.

It is found in the cytoplasm. Functionally, plays an essential role in the initiation and regulation of chromosomal replication. ATP-DnaA binds to the origin of replication (oriC) to initiate formation of the DNA replication initiation complex once per cell cycle. Binds the DnaA box (a 9 base pair repeat at the origin) and separates the double-stranded (ds)DNA. Forms a right-handed helical filament on oriC DNA; dsDNA binds to the exterior of the filament while single-stranded (ss)DNA is stabiized in the filament's interior. The ATP-DnaA-oriC complex binds and stabilizes one strand of the AT-rich DNA unwinding element (DUE), permitting loading of DNA polymerase. After initiation quickly degrades to an ADP-DnaA complex that is not apt for DNA replication. Binds acidic phospholipids. The chain is Chromosomal replication initiator protein DnaA from Geotalea uraniireducens (strain Rf4) (Geobacter uraniireducens).